Here is a 199-residue protein sequence, read N- to C-terminus: uncharacterized protein (199 aa).

The N-terminal stretch at 1–28 is a signal peptide; it reads MKKLATVGSLIVTSTLVFSSMPFQNAHA.

It is found in the secreted. This is an uncharacterized protein from Staphylococcus aureus (strain NCTC 8325 / PS 47).